Here is a 450-residue protein sequence, read N- to C-terminus: TNF receptor-associated factor family protein DDB_G0273433/DDB_G0273509 (450 aa).

Residues 26–73 form an RING-type; degenerate zinc finger; that stretch reads CQICFNSVIDFKKETLSFDVLQCRNGHISCHECWNRQLSIKQECPSCK. 2 consecutive TRAF-type zinc fingers follow at residues 129 to 185 and 186 to 243; these read HHLK…KKLN and KHIE…SQLS. Positions 257–297 form a coiled coil; it reads QNVMDLHKLQLDECNQDYRKLEKQNRDLEKRLFYLESTVNS. In terms of domain architecture, MATH spans 319 to 439; that stretch reads VYKGKWVINN…NNSLTISISI (121 aa).

Belongs to the TNF receptor-associated factor family. A subfamily.

It is found in the cytoplasm. Probable adapter protein and signal transducer that links members of the tumor necrosis factor receptor family to different signaling pathways by association with the receptor cytoplasmic domain and kinases. The protein is TNF receptor-associated factor family protein DDB_G0273433/DDB_G0273509 of Dictyostelium discoideum (Social amoeba).